A 130-amino-acid chain; its full sequence is Small ribosomal subunit protein uS8 (130 aa).

It belongs to the universal ribosomal protein uS8 family. In terms of assembly, part of the 30S ribosomal subunit.

In terms of biological role, one of the primary rRNA binding proteins, it binds directly to 16S rRNA central domain where it helps coordinate assembly of the platform of the 30S subunit. The sequence is that of Small ribosomal subunit protein uS8 from Methanocorpusculum labreanum (strain ATCC 43576 / DSM 4855 / Z).